Here is a 179-residue protein sequence, read N- to C-terminus: Probable WRKY transcription factor 24 (179 aa).

The segment at residues 92 to 157 is a DNA-binding region (WRKY); that stretch reads SDDDVLDDGY…YEGVHNHPCE (66 aa).

Belongs to the WRKY group II-c family.

It localises to the nucleus. Its function is as follows. Transcription factor. Interacts specifically with the W box (5'-(T)TGAC[CT]-3'), a frequently occurring elicitor-responsive cis-acting element. In Arabidopsis thaliana (Mouse-ear cress), this protein is Probable WRKY transcription factor 24 (WRKY24).